Reading from the N-terminus, the 240-residue chain is Extracellular superoxide dismutase [Cu-Zn] (240 aa).

A signal peptide spans 1-18; sequence MLALLCSCLLLAAGASDA. 2 disulfides stabilise this stretch: Cys-63-Cys-208 and Cys-125-Cys-207. The N-linked (GlcNAc...) asparagine glycan is linked to Asn-107. His-114, His-116, and His-131 together coordinate Cu cation. Zn(2+) contacts are provided by His-131, His-139, His-142, and Asp-145. Cu cation is bound at residue His-181. N-linked (Glc) (glycation) lysine; in vitro glycosylation is found at Lys-229 and Lys-230.

The protein belongs to the Cu-Zn superoxide dismutase family. In terms of assembly, homotetramer. Directly interacts with ATP7A; this interaction is copper-dependent and is required for SOD3 activity. Requires Cu cation as cofactor. Zn(2+) serves as cofactor. In terms of tissue distribution, expressed in blood vessels, heart, lung, kidney and placenta. Major SOD isoenzyme in extracellular fluids such as plasma, lymph and synovial fluid.

It is found in the secreted. The protein localises to the extracellular space. Its subcellular location is the golgi apparatus. It localises to the trans-Golgi network. The catalysed reaction is 2 superoxide + 2 H(+) = H2O2 + O2. Functionally, protect the extracellular space from toxic effect of reactive oxygen intermediates by converting superoxide radicals into hydrogen peroxide and oxygen. This is Extracellular superoxide dismutase [Cu-Zn] (SOD3) from Homo sapiens (Human).